We begin with the raw amino-acid sequence, 261 residues long: Carbonic anhydrase 1 (261 aa).

Positions 1 to 31 (MASPDWGYDDKNGPEQWSKLYPIANGNNQSP) are disordered. A2 is subject to N-acetylalanine. The Alpha-carbonic anhydrase domain maps to 4–261 (PDWGYDDKNG…LKGRTVRASF (258 aa)). The active-site Proton donor/acceptor is the H65. Zn(2+)-binding residues include H95, H97, and H120. Residues T200 and 200-201 (TH) contribute to the substrate site. A disordered region spans residues 240–261 (VPMQHNNRPTQPLKGRTVRASF).

Belongs to the alpha-carbonic anhydrase family. Zn(2+) is required as a cofactor.

The protein resides in the cytoplasm. It carries out the reaction hydrogencarbonate + H(+) = CO2 + H2O. The enzyme catalyses urea = cyanamide + H2O. Its activity is regulated as follows. Inhibited by acetazolamide. In terms of biological role, catalyzes the reversible hydration of carbon dioxide. Can hydrate cyanamide to urea. The chain is Carbonic anhydrase 1 (CA1) from Gorilla gorilla gorilla (Western lowland gorilla).